The primary structure comprises 217 residues: Adenylate kinase (217 aa).

Residue 10–15 (GAGKGT) coordinates ATP. The segment at 30 to 59 (STGDMLRAQVKAGTALGLEAKKHMDAGGLV) is NMP. AMP contacts are provided by residues Thr31, Arg36, 57–59 (GLV), 85–88 (GFPR), and Gln92. An LID region spans residues 122-159 (GRRAHLASGRTYHVKFNPPKVEGIDDVTGEPLVQRDDD). ATP is bound by residues Arg123 and 132–133 (TY). AMP is bound by residues Arg156 and Arg167. Gly203 contributes to the ATP binding site.

This sequence belongs to the adenylate kinase family. As to quaternary structure, monomer.

The protein localises to the cytoplasm. The enzyme catalyses AMP + ATP = 2 ADP. Its pathway is purine metabolism; AMP biosynthesis via salvage pathway; AMP from ADP: step 1/1. Catalyzes the reversible transfer of the terminal phosphate group between ATP and AMP. Plays an important role in cellular energy homeostasis and in adenine nucleotide metabolism. The chain is Adenylate kinase from Dechloromonas aromatica (strain RCB).